A 315-amino-acid polypeptide reads, in one-letter code: tRNA dimethylallyltransferase (315 aa).

An ATP-binding site is contributed by 15-22 (GPTACGKS). 17–22 (TACGKS) serves as a coordination point for substrate. 2 interaction with substrate tRNA regions span residues 40-43 (DSAL) and 162-166 (QRLIR).

Belongs to the IPP transferase family. Monomer. The cofactor is Mg(2+).

It catalyses the reaction adenosine(37) in tRNA + dimethylallyl diphosphate = N(6)-dimethylallyladenosine(37) in tRNA + diphosphate. In terms of biological role, catalyzes the transfer of a dimethylallyl group onto the adenine at position 37 in tRNAs that read codons beginning with uridine, leading to the formation of N6-(dimethylallyl)adenosine (i(6)A). The polypeptide is tRNA dimethylallyltransferase (Buchnera aphidicola subsp. Acyrthosiphon pisum (strain APS) (Acyrthosiphon pisum symbiotic bacterium)).